Here is an 895-residue protein sequence, read N- to C-terminus: Serine-rich coiled-coil domain-containing protein 1 (895 aa).

Disordered stretches follow at residues 1 to 142 (MGDS…KEPS), 154 to 177 (SGRS…KQST), 332 to 394 (ELHS…RTLG), and 459 to 497 (RSSS…SSKM). Low complexity predominate over residues 43-56 (SSSPSSTNSSSGST). The segment covering 83-102 (TEQNLSISNGAQPSHSNMQK) has biased composition (polar residues). The segment covering 131 to 142 (LTEDFEREKEPS) has biased composition (basic and acidic residues). Polar residues predominate over residues 348 to 358 (SLQSTELSVGN). Residues 675 to 705 (MLRLQLKDRDELISQLQAELEKVQHLQKAFA) are a coiled coil. Residues 731-753 (QGGRETTHRNRTMSQSHSTRDRK) are disordered.

It belongs to the CCSER family.

In Mus musculus (Mouse), this protein is Serine-rich coiled-coil domain-containing protein 1 (Ccser1).